The sequence spans 327 residues: Beta-1,4-galactosyltransferase 7 (327 aa).

At 1 to 30 (MLPSRRKAAQLPWEDGRARLLPGGLRRKCS) the chain is on the cytoplasmic side. A helical; Signal-anchor for type II membrane protein transmembrane segment spans residues 31–51 (IFHLFIAFLLLVFFSLLWLQL). Topologically, residues 52-327 (SCSGDMAQVT…KTATPWCIFG (276 aa)) are lumenal. Residues 61–88 (TRGQGQETSGPPRACPPEPPPEHWEEDE) are disordered. Residues 100–104 (PFRER) and 139–141 (FNR) each bind UDP-alpha-D-galactose. Residue N154 is glycosylated (N-linked (GlcNAc...) asparagine). Residues 164–165 (VD), Y194, and W224 each bind UDP-alpha-D-galactose. D165 serves as a coordination point for Mn(2+). Residue 226–229 (REDD) coordinates N-acetyl-D-glucosamine. H257 serves as a coordination point for Mn(2+). Residues 257–259 (HLH) and R266 each bind UDP-alpha-D-galactose.

Belongs to the glycosyltransferase 7 family. It depends on Mn(2+) as a cofactor.

Its subcellular location is the golgi apparatus. The protein resides in the golgi stack membrane. The enzyme catalyses 3-O-(beta-D-xylosyl)-L-seryl-[protein] + UDP-alpha-D-galactose = 3-O-(beta-D-galactosyl-(1-&gt;4)-beta-D-xylosyl)-L-seryl-[protein] + UDP + H(+). It functions in the pathway protein modification; protein glycosylation. In terms of biological role, required for the biosynthesis of the tetrasaccharide linkage region of proteoglycans, especially for small proteoglycans in skin fibroblasts. In Mus musculus (Mouse), this protein is Beta-1,4-galactosyltransferase 7 (B4galt7).